Here is a 519-residue protein sequence, read N- to C-terminus: C-glycoside 3-oxidase (519 aa).

FAD is bound at residue glutamate 41. The disordered stretch occupies residues 43-93 (GPTVSNPPGAHVKNIEDPERRSHAQRASEGPGAGAETVNSPGAVKSGERRA). Positions 55–64 (KNIEDPERRS) are enriched in basic and acidic residues. Serine 118, asparagine 120, methionine 124, threonine 129, alanine 131, and valine 234 together coordinate FAD. Histidine 440 serves as the catalytic Proton acceptor. Residues asparagine 474 and threonine 486 each contribute to the FAD site.

It belongs to the GMC oxidoreductase family. As to quaternary structure, monomer. FAD serves as cofactor.

The catalysed reaction is isovitexin + O2 = 3''-dehydroisovitexin + H2O2. It carries out the reaction isoorientin + O2 = 3''-dehydroisoorientin + H2O2. The enzyme catalyses mangiferin + O2 = 3'-dehydromangiferin + H2O2. Its function is as follows. FAD-dependent C-glycoside-metabolizing enzyme that participates in the degradation of certain C-glycosides by catalyzing the oxidation of the hydroxyl group at the C3 position of the sugar moiety. Shows oxidase activity toward various C-glycosides such as isovitexin, isoorientin and mangiferin but cannot use carminic acid, puerarin, orientin or aloesin. Shows weak activity (100 to 1000-fold lower) with O-glycosides. Probably plays a crucial role in the metabolism of C-glycosides in nature. The chain is C-glycoside 3-oxidase from Arthrobacter globiformis (strain ATCC 8010 / DSM 20124 / JCM 1332 / NBRC 12137 / NCIMB 8907 / NRRL B-2979 / 168).